A 181-amino-acid chain; its full sequence is Ribonuclease HII (181 aa).

The region spanning 1-181 (MICGIDEVGR…SLHRRNFKLI (181 aa)) is the RNase H type-2 domain. Residues D6, E7, and D98 each contribute to the a divalent metal cation site.

The protein belongs to the RNase HII family. Requires Mn(2+) as cofactor. Mg(2+) is required as a cofactor.

The protein localises to the cytoplasm. The catalysed reaction is Endonucleolytic cleavage to 5'-phosphomonoester.. Functionally, endonuclease that specifically degrades the RNA of RNA-DNA hybrids. The sequence is that of Ribonuclease HII from Borrelia garinii subsp. bavariensis (strain ATCC BAA-2496 / DSM 23469 / PBi) (Borreliella bavariensis).